The primary structure comprises 569 residues: CTP synthase (569 aa).

Residues 1–272 (MARPKNVKHI…DSRVLKKLGI (272 aa)) form an amidoligase domain region. Ser-18 is a binding site for CTP. Residue Ser-18 coordinates UTP. ATP is bound at residue 19 to 24 (SLGKGI). L-glutamine is bound at residue Tyr-59. An ATP-binding site is contributed by Asp-76. Mg(2+)-binding residues include Asp-76 and Glu-146. Residues 153-155 (DIE), 193-198 (KTKPTQ), and Lys-229 each bind CTP. UTP-binding positions include 193–198 (KTKPTQ) and Lys-229. One can recognise a Glutamine amidotransferase type-1 domain in the interval 299–543 (TIGICGKYTE…VAAAKDYARG (245 aa)). L-glutamine is bound at residue Gly-363. Residue Cys-390 is the Nucleophile; for glutamine hydrolysis of the active site. L-glutamine contacts are provided by residues 391–394 (LGMQ), Glu-414, and Arg-471. Active-site residues include His-516 and Glu-518.

The protein belongs to the CTP synthase family. Homotetramer.

It catalyses the reaction UTP + L-glutamine + ATP + H2O = CTP + L-glutamate + ADP + phosphate + 2 H(+). The enzyme catalyses L-glutamine + H2O = L-glutamate + NH4(+). The catalysed reaction is UTP + NH4(+) + ATP = CTP + ADP + phosphate + 2 H(+). The protein operates within pyrimidine metabolism; CTP biosynthesis via de novo pathway; CTP from UDP: step 2/2. With respect to regulation, allosterically activated by GTP, when glutamine is the substrate; GTP has no effect on the reaction when ammonia is the substrate. The allosteric effector GTP functions by stabilizing the protein conformation that binds the tetrahedral intermediate(s) formed during glutamine hydrolysis. Inhibited by the product CTP, via allosteric rather than competitive inhibition. Its function is as follows. Catalyzes the ATP-dependent amination of UTP to CTP with either L-glutamine or ammonia as the source of nitrogen. Regulates intracellular CTP levels through interactions with the four ribonucleotide triphosphates. In Chlorobium chlorochromatii (strain CaD3), this protein is CTP synthase.